A 589-amino-acid polypeptide reads, in one-letter code: Guanylate-binding protein 2 (589 aa).

Residues 1 to 309 (MASEIHMSEP…GAISNGSLPC (309 aa)) are GTPase domain (Globular). Residues 35–276 (TQPVVVVAIV…FTSYILSYSS (242 aa)) enclose the GB1/RHD3-type G domain. Residues 45-52 (GLYRTGKS), 181-182 (RD), and Leu-245 contribute to the GTP site. The residue at position 586 (Cys-586) is a Cysteine methyl ester. Residue Cys-586 is the site of S-geranylgeranyl cysteine attachment. The propeptide at 587 to 589 (TIL) is removed in mature form.

The protein belongs to the TRAFAC class dynamin-like GTPase superfamily. GB1/RHD3 GTPase family. GB1 subfamily. Homodimer; homodimerization occurs upon GTP-binding and is required for the association with membranous structures. Heterodimer with other family members, including GBP1, GBP3, GBP4 and GBP5. Isoprenylation is required for proper subcellular location.

The protein resides in the cytoplasmic vesicle membrane. The protein localises to the golgi apparatus membrane. It is found in the cytoplasm. Its subcellular location is the perinuclear region. It catalyses the reaction GTP + H2O = GDP + phosphate + H(+). Its function is as follows. Interferon (IFN)-inducible GTPase that plays important roles in innate immunity against a diverse range of bacterial, viral and protozoan pathogens. Hydrolyzes GTP to GMP in 2 consecutive cleavage reactions, but the major reaction product is GDP. Following infection, recruited to the pathogen-containing vacuoles or vacuole-escaped bacteria and acts as a positive regulator of inflammasome assembly by promoting the release of inflammasome ligands from bacteria. Acts by promoting lysis of pathogen-containing vacuoles, releasing pathogens into the cytosol. Following pathogen release in the cytosol, promotes recruitment of proteins that mediate bacterial cytolysis, such as Gm12250/Irgb10: this liberates ligands that are detected by inflammasomes, such as lipopolysaccharide (LPS) that activates the non-canonical CASP4/CASP11 inflammasome or double-stranded DNA (dsDNA) that activates the AIM2 inflammasome. Confers protection to the protozoan pathogen Toxoplasma gondii. Independently of its GTPase activity, acts as an inhibitor of various viruses infectivity by inhibiting FURIN-mediated maturation of viral envelope proteins. The sequence is that of Guanylate-binding protein 2 from Mus musculus (Mouse).